Consider the following 202-residue polypeptide: Small ribosomal subunit protein uS4c (202 aa).

The S4 RNA-binding domain occupies 90–154 (MRLDNILFRL…SQSIITKNLN (65 aa)).

It belongs to the universal ribosomal protein uS4 family. As to quaternary structure, part of the 30S ribosomal subunit. Contacts protein S5. The interaction surface between S4 and S5 is involved in control of translational fidelity.

The protein localises to the plastid. Its subcellular location is the chloroplast. One of the primary rRNA binding proteins, it binds directly to 16S rRNA where it nucleates assembly of the body of the 30S subunit. In terms of biological role, with S5 and S12 plays an important role in translational accuracy. This is Small ribosomal subunit protein uS4c (rps4) from Monoclea forsteri (Liverwort).